Consider the following 118-residue polypeptide: Small ribosomal subunit protein uS13 (118 aa).

The disordered stretch occupies residues 94–118 (SLPVRGQRTKTNARTRKGPRKAIKK).

Belongs to the universal ribosomal protein uS13 family. In terms of assembly, part of the 30S ribosomal subunit. Forms a loose heterodimer with protein S19. Forms two bridges to the 50S subunit in the 70S ribosome.

Located at the top of the head of the 30S subunit, it contacts several helices of the 16S rRNA. In the 70S ribosome it contacts the 23S rRNA (bridge B1a) and protein L5 of the 50S subunit (bridge B1b), connecting the 2 subunits; these bridges are implicated in subunit movement. Contacts the tRNAs in the A and P-sites. In Aeromonas hydrophila subsp. hydrophila (strain ATCC 7966 / DSM 30187 / BCRC 13018 / CCUG 14551 / JCM 1027 / KCTC 2358 / NCIMB 9240 / NCTC 8049), this protein is Small ribosomal subunit protein uS13.